The primary structure comprises 98 residues: Large ribosomal subunit protein uL23 (98 aa).

It belongs to the universal ribosomal protein uL23 family. Part of the 50S ribosomal subunit. Contacts protein L29, and trigger factor when it is bound to the ribosome.

One of the early assembly proteins it binds 23S rRNA. One of the proteins that surrounds the polypeptide exit tunnel on the outside of the ribosome. Forms the main docking site for trigger factor binding to the ribosome. In Methylobacterium radiotolerans (strain ATCC 27329 / DSM 1819 / JCM 2831 / NBRC 15690 / NCIMB 10815 / 0-1), this protein is Large ribosomal subunit protein uL23.